Here is a 452-residue protein sequence, read N- to C-terminus: Lysine-rich nucleolar protein 1 (452 aa).

3 disordered regions span residues methionine 1 to proline 28, valine 55 to glycine 161, and arginine 184 to aspartate 305. A Glycyl lysine isopeptide (Lys-Gly) (interchain with G-Cter in SUMO2) cross-link involves residue lysine 7. A compositionally biased stretch (basic residues) spans leucine 65–histidine 75. Over residues isoleucine 78–histidine 98 the composition is skewed to basic and acidic residues. Serine 112 carries the phosphoserine modification. A Glycyl lysine isopeptide (Lys-Gly) (interchain with G-Cter in SUMO2) cross-link involves residue lysine 126. A compositionally biased stretch (basic and acidic residues) spans threonine 127–arginine 139. Position 128 is a phosphoserine (serine 128). Composition is skewed to basic residues over residues valine 140–lysine 151 and serine 258–lysine 267. Position 258 is a phosphoserine (serine 258). A Glycyl lysine isopeptide (Lys-Gly) (interchain with G-Cter in SUMO2) cross-link involves residue lysine 280. The span at valine 293–aspartate 305 shows a compositional bias: acidic residues. Residues glutamate 300–aspartate 452 form an interaction with ZNF106 region. Threonine 304 is modified (phosphothreonine). Glycyl lysine isopeptide (Lys-Gly) (interchain with G-Cter in SUMO2) cross-links involve residues lysine 313, lysine 347, lysine 367, lysine 369, and lysine 401. Arginine 424 is modified (omega-N-methylarginine). Residue lysine 436 forms a Glycyl lysine isopeptide (Lys-Gly) (interchain with G-Cter in SUMO2) linkage.

Interacts with ZNF106.

The protein localises to the nucleus. It localises to the nucleolus. This is Lysine-rich nucleolar protein 1 (KNOP1) from Bos taurus (Bovine).